The sequence spans 380 residues: Cytochrome b (380 aa).

The next 4 membrane-spanning stretches (helical) occupy residues 34–54, 78–99, 114–134, and 179–199; these read FGSL…LLAM, WLIR…YMHI, WNTG…GYVL, and FFAL…IHLT. 2 residues coordinate heme b: His-84 and His-98. Heme b-binding residues include His-183 and His-197. A ubiquinone is bound at residue His-202. 4 helical membrane passes run 227–247, 289–309, 321–341, and 348–368; these read LKDI…ALFT, LGGV…PLLH, LSQS…WVGS, and FIII…ILLP.

Belongs to the cytochrome b family. The cytochrome bc1 complex contains 11 subunits: 3 respiratory subunits (MT-CYB, CYC1 and UQCRFS1), 2 core proteins (UQCRC1 and UQCRC2) and 6 low-molecular weight proteins (UQCRH/QCR6, UQCRB/QCR7, UQCRQ/QCR8, UQCR10/QCR9, UQCR11/QCR10 and a cleavage product of UQCRFS1). This cytochrome bc1 complex then forms a dimer. Requires heme b as cofactor.

The protein resides in the mitochondrion inner membrane. In terms of biological role, component of the ubiquinol-cytochrome c reductase complex (complex III or cytochrome b-c1 complex) that is part of the mitochondrial respiratory chain. The b-c1 complex mediates electron transfer from ubiquinol to cytochrome c. Contributes to the generation of a proton gradient across the mitochondrial membrane that is then used for ATP synthesis. The chain is Cytochrome b (MT-CYB) from Falco peregrinus (Peregrine falcon).